The following is a 384-amino-acid chain: MSKALDIARDLLACPSVTPADAGALGVLEKLLKDAGFETYRLTFSEPGADDTDNLYARIGAGHPHITFAGHTDVVPPGDNAAWSHDAFAATVDGGVLYGRGAVDMKGAIACAAAAVLDYLEANGGKPKGSISFLITGDEEGPAVNGTVKLLDWAAKRGEKFDHCLLGEPSNVNALGDCIKAGRRGSLSGTLIVEGKQGHAAYPDRAHNPLPEIASLVAALDADPLDQGSDHFPPSNLEFLSIDTGNPAWNVIPAQARARFNIRHNDCRTQDALRALIEARVEKLTGNRITARIEWEPSNADAFLTQPGAFTDLVIDAIEEVTGRKPKLDTGGGTSDARFITHYCPVLEFGLVGQTMHQIDERTPVADLDALTQIYRGVLTRYFK.

A Zn(2+)-binding site is contributed by histidine 71. Aspartate 73 is a catalytic residue. Residue aspartate 104 coordinates Zn(2+). The active-site Proton acceptor is the glutamate 139. The Zn(2+) site is built by glutamate 140, glutamate 168, and histidine 357.

It belongs to the peptidase M20A family. DapE subfamily. Homodimer. The cofactor is Zn(2+). Co(2+) serves as cofactor.

It catalyses the reaction N-succinyl-(2S,6S)-2,6-diaminopimelate + H2O = (2S,6S)-2,6-diaminopimelate + succinate. Its pathway is amino-acid biosynthesis; L-lysine biosynthesis via DAP pathway; LL-2,6-diaminopimelate from (S)-tetrahydrodipicolinate (succinylase route): step 3/3. In terms of biological role, catalyzes the hydrolysis of N-succinyl-L,L-diaminopimelic acid (SDAP), forming succinate and LL-2,6-diaminopimelate (DAP), an intermediate involved in the bacterial biosynthesis of lysine and meso-diaminopimelic acid, an essential component of bacterial cell walls. This Afipia carboxidovorans (strain ATCC 49405 / DSM 1227 / KCTC 32145 / OM5) (Oligotropha carboxidovorans) protein is Succinyl-diaminopimelate desuccinylase.